Here is a 230-residue protein sequence, read N- to C-terminus: uncharacterized protein (230 aa).

It belongs to the transferase hexapeptide repeat family.

This is an uncharacterized protein from Escherichia coli O6:K15:H31 (strain 536 / UPEC).